We begin with the raw amino-acid sequence, 391 residues long: Homocysteine-responsive endoplasmic reticulum-resident ubiquitin-like domain member 1 protein (391 aa).

Met-1 is subject to N-acetylmethionine. Residues 1 to 263 (MESETEPEPV…VEEDDEINRD (263 aa)) lie on the Cytoplasmic side of the membrane. The Ubiquitin-like domain maps to 10-72 (VTLLVKSPNQ…LLDHQCLRDL (63 aa)). Residues 100-126 (KVAESTEEPAGSNRGQYPEDSSSDGLR) form a disordered region. The segment covering 112–124 (NRGQYPEDSSSDG) has biased composition (polar residues). The interval 115–200 (QYPEDSSSDG…ASGAFVPPPS (86 aa)) is interaction with UBQLN1. At Ser-135 the chain carries Phosphoserine. An interaction with SYVN1 region spans residues 170-190 (LSWFQQIYARQYYMQYLAATA). The chain crosses the membrane as a helical span at residues 264-284 (WLDWTYSAATFSVFLSILYFY). The Lumenal portion of the chain corresponds to 285 to 289 (SSLSR). The chain crosses the membrane as a helical span at residues 290-310 (FLMVMGATVVMYLHHVGWFPF). Residues 311 to 391 (RPRPVQNFPN…LPEGPPAIAN (81 aa)) lie on the Cytoplasmic side of the membrane. Positions 318 to 359 (FPNDGPPPDVVNQDPNNNLQEGTDPETEDPNHLPPDRDVLDG) are disordered. A compositionally biased stretch (basic and acidic residues) spans 346-357 (DPNHLPPDRDVL).

As to quaternary structure, interacts with PSEN1 and PSEN2. Interacts with UBXN6. Interacts with UBQLN1, UBQLN2 and UBQLN4. Component of the HRD1 complex, which comprises at least SYNV1/HRD1, FAM8A1, HERPUD1/HERP, OS9, SEL1L and UBE2J1. FAM8A1 binding to SYNV1 may promote recruitment of HERPUD1 to the HRD1 complex. In terms of tissue distribution, widely expressed; in the brain, expression seems to be restricted to neurons and vascular smooth muscle cells. Present in activated microglia in senile plaques in the brain of patients with Alzheimer disease.

It localises to the endoplasmic reticulum membrane. Component of the endoplasmic reticulum quality control (ERQC) system also called ER-associated degradation (ERAD) involved in ubiquitin-dependent degradation of misfolded endoplasmic reticulum proteins. Could enhance presenilin-mediated amyloid-beta protein 40 generation. Binds to ubiquilins and this interaction is required for efficient degradation of CD3D via the ERAD pathway. The polypeptide is Homocysteine-responsive endoplasmic reticulum-resident ubiquitin-like domain member 1 protein (HERPUD1) (Homo sapiens (Human)).